The chain runs to 961 residues: E4 ubiquitin-protein ligase UFD2 (961 aa).

One can recognise a U-box domain in the interval 880–954; the sequence is DVPDEFLDPL…LCFKKQKKEE (75 aa).

The protein belongs to the ubiquitin conjugation factor E4 family. Interacts with CDC48. Interacts with the ubiquitin-like domain of RAD23 and DSK2. Interacts with PEX29.

Its subcellular location is the cytoplasm. The protein resides in the nucleus. The enzyme catalyses S-ubiquitinyl-[E2 ubiquitin-conjugating enzyme]-L-cysteine + [acceptor protein]-L-lysine = [E2 ubiquitin-conjugating enzyme]-L-cysteine + N(6)-ubiquitinyl-[acceptor protein]-L-lysine.. It functions in the pathway protein modification; protein ubiquitination. E4 ubiquitin chain-elongation enzyme specifically involved in polyubiquitin chain assembly. Binds to CDC48 and elongates mono- and diubiquitinated ERAD substrates presented by the UFD1-NPL4-CDC48/p97 (UNC) AAA ATPase complex to a chain length of 4 to 6 ubiquitin moieties. Delivers these polyubiquitinated substrates to RAD23 and DSK2, which target them to the proteasome. Has E3 ubiquitin-protein ligase activity, accepting ubiquitin from its cognate E2 ubiquitin-conjugating enzyme UBC4. Enhances ubiquitination at 'Lys-48', but not at 'Lys-29' of the Ub moiety. Promotes ubiquitin chain elongation at 'Lys-48' on the DOA10 substrate PEX29. Also involved in the proteolytic processing of the ER-bound transcription factor SPT23. The sequence is that of E4 ubiquitin-protein ligase UFD2 (UFD2) from Saccharomyces cerevisiae (strain ATCC 204508 / S288c) (Baker's yeast).